Here is a 55-residue protein sequence, read N- to C-terminus: uncharacterized protein (55 aa).

The N-terminal stretch at Met1–Ala19 is a signal peptide.

This is an uncharacterized protein from Orgyia pseudotsugata multicapsid polyhedrosis virus (OpMNPV).